The following is a 311-amino-acid chain: Homeobox protein CDX-2 (311 aa).

S60 is modified (phosphoserine). Positions 111-151 (EYHAHHHPHHHPHHPAASPSCASGLLQTLNLGPPGPAATAA) are disordered. The segment covering 114–124 (AHHHPHHHPHH) has biased composition (basic residues). An interaction with DNA region spans residues 185–215 (KDKYRVVYTDHQRLELEKEFHFSRYITIRRK). The homeobox DNA-binding region spans 185–244 (KDKYRVVYTDHQRLELEKEFHFSRYITIRRKSELAATLGLSERQVKIWFQNRRAKERKIK). The interaction with 5-mCpG DNA stretch occupies residues 227–241 (RQVKIWFQNRRAKER). The segment at 239 to 311 (KERKIKKKQQ…GGVLNSTVTQ (73 aa)) is disordered. Residues 248 to 257 (QQQQQQQQQQ) are compositionally biased toward low complexity. Over residues 258 to 268 (PPQPPPQPSQP) the composition is skewed to pro residues. A Phosphoserine; by CDK2 modification is found at S281. A 4S motif; modulates transactivation activity and protein stability motif is present at residues 281-293 (SPVTSLQGSVPGS). The segment covering 285-298 (SLQGSVPGSVPGVL) has biased composition (low complexity).

It belongs to the Caudal homeobox family. Can bind DNA as a monomer or homodimer. In terms of processing, ubiquitinated, leading to its degradation by the proteasome. Post-translationally, phosphorylation at Ser-60 reduces transactivation capacity. Phosphorylation at Ser-281 reduces transactivation capacity and increases ubiquitin-dependent proteasome degradation. In terms of tissue distribution, in the intestine, detected in ileum and proximal and distal colon (at protein level). In adult small intestine, predominantly localized in crypt and lower villus cells of the epithelium (at protein level). Expressed in the intestine but not detected in other tissues including stomach, liver, kidney, spleen, brain, heart, lung, pancreas, skeletal muscle and testis. Expressed specifically in gut epithelium where it is not restricted to a particular cell lineage. Abundant expression is seen in the proximal colon with slightly lower levels in distal colon. Expression in the proximal colon is not restricted either to a particular cell lineage or stage of differentiation while in the distal colon it is more abundant in the differentiated cells towards the top of the crypt.

It is found in the nucleus. Functionally, transcription factor which regulates the transcription of multiple genes expressed in the intestinal epithelium. Binds to the promoter of the intestinal sucrase-isomaltase SI and activates SI transcription. Binds to the DNA sequence 5'-ATAAAAACTTAT-3' in the promoter region of VDR and activates VDR transcription. Binds to and activates transcription of LPH. Activates transcription of CLDN2 and intestinal mucin MUC2. Binds to the 5'-AATTTTTTACAACACCT-3' DNA sequence in the promoter region of CA1 and activates CA1 transcription. Important in broad range of functions from early differentiation to maintenance of the intestinal epithelial lining of both the small and large intestine. Binds preferentially to methylated DNA. This is Homeobox protein CDX-2 (Cdx2) from Mus musculus (Mouse).